Here is a 284-residue protein sequence, read N- to C-terminus: 2-dehydro-3-deoxyphosphooctonate aldolase (284 aa).

The protein belongs to the KdsA family.

The protein resides in the cytoplasm. The catalysed reaction is D-arabinose 5-phosphate + phosphoenolpyruvate + H2O = 3-deoxy-alpha-D-manno-2-octulosonate-8-phosphate + phosphate. The protein operates within carbohydrate biosynthesis; 3-deoxy-D-manno-octulosonate biosynthesis; 3-deoxy-D-manno-octulosonate from D-ribulose 5-phosphate: step 2/3. Its pathway is bacterial outer membrane biogenesis; lipopolysaccharide biosynthesis. This is 2-dehydro-3-deoxyphosphooctonate aldolase from Burkholderia multivorans (strain ATCC 17616 / 249).